Here is a 141-residue protein sequence, read N- to C-terminus: Hemoglobin subunit alpha-1/2 (141 aa).

A Globin domain is found at 1–141 (VLSPADKANV…VGTVLTSKYR (141 aa)). Ser3 is modified (phosphoserine). 2 positions are modified to N6-succinyllysine: Lys7 and Lys11. Lys16 is modified (N6-acetyllysine; alternate). The residue at position 16 (Lys16) is an N6-succinyllysine; alternate. Tyr24 is subject to Phosphotyrosine. Position 35 is a phosphoserine (Ser35). Residue Lys40 is modified to N6-succinyllysine. Residue Ser49 is modified to Phosphoserine. His58 is an O2 binding site. His87 is a binding site for heme b. A Phosphoserine modification is found at Ser102. Thr108 bears the Phosphothreonine mark. Residues Ser124 and Ser131 each carry the phosphoserine modification. Residues Thr134 and Thr137 each carry the phosphothreonine modification. At Ser138 the chain carries Phosphoserine.

The protein belongs to the globin family. As to quaternary structure, heterotetramer of two alpha chains and two beta chains. In terms of tissue distribution, red blood cells.

Its function is as follows. Involved in oxygen transport from the lung to the various peripheral tissues. The chain is Hemoglobin subunit alpha-1/2 from Macroderma gigas (Australian ghost bat).